Reading from the N-terminus, the 499-residue chain is Glutamate--tRNA ligase (499 aa).

The 'HIGH' region motif lies at 12–22 (PSPTGHLHIGN). Residues 259 to 263 (KLSKR) carry the 'KMSKS' region motif. K262 contributes to the ATP binding site.

Belongs to the class-I aminoacyl-tRNA synthetase family. Glutamate--tRNA ligase type 1 subfamily. Monomer.

Its subcellular location is the cytoplasm. The catalysed reaction is tRNA(Glu) + L-glutamate + ATP = L-glutamyl-tRNA(Glu) + AMP + diphosphate. Catalyzes the attachment of glutamate to tRNA(Glu) in a two-step reaction: glutamate is first activated by ATP to form Glu-AMP and then transferred to the acceptor end of tRNA(Glu). The protein is Glutamate--tRNA ligase of Lactobacillus gasseri (strain ATCC 33323 / DSM 20243 / BCRC 14619 / CIP 102991 / JCM 1131 / KCTC 3163 / NCIMB 11718 / NCTC 13722 / AM63).